We begin with the raw amino-acid sequence, 241 residues long: MIDFTGKTSLITGASGGIGSAIARLLHKLGSKVIISGSNEKKLKLLGNTLKDNYIIEVCNLANKEECNNLISKISNLDILVCNAGITSDTLAIRMKDQDFDKVIDINLKANFILNREAIKKMIQKRYGRIINISSIVGIAGNPGQANYCASKAGLIGMTKSLSYEVATRGITVNAVAPGFIKSDMTDKLNEKQREAIVQKIPLGTYGIPEDVAYAVAFLASNHASYITGQTLHVNGGMLMV.

NADP(+)-binding positions include 13-16 (GASG), Ser38, 57-58 (EV), and Asn83. Ser135 is a substrate binding site. The Proton acceptor role is filled by Tyr148. Residues 148 to 152 (YCASK) and Ile181 contribute to the NADP(+) site.

It belongs to the short-chain dehydrogenases/reductases (SDR) family. As to quaternary structure, homotetramer.

It catalyses the reaction a (3R)-hydroxyacyl-[ACP] + NADP(+) = a 3-oxoacyl-[ACP] + NADPH + H(+). Its pathway is lipid metabolism; fatty acid biosynthesis. In terms of biological role, catalyzes the NADPH-dependent reduction of beta-ketoacyl-ACP substrates to beta-hydroxyacyl-ACP products, the first reductive step in the elongation cycle of fatty acid biosynthesis. The sequence is that of 3-oxoacyl-[acyl-carrier-protein] reductase FabG (fabG) from Rickettsia typhi (strain ATCC VR-144 / Wilmington).